Consider the following 211-residue polypeptide: Phosphoheptose isomerase (211 aa).

An SIS domain is found at 50 to 211 (IAGTFEDGGK…VERMLGYCRL (162 aa)). Position 65 to 67 (65 to 67 (NGG)) interacts with substrate. Positions 74 and 78 each coordinate Zn(2+). Substrate-binding positions include E78, 109–110 (ND), 135–137 (STS), S140, and Q188. 2 residues coordinate Zn(2+): Q188 and H196.

The protein belongs to the SIS family. GmhA subfamily. Zn(2+) is required as a cofactor.

Its subcellular location is the cytoplasm. The enzyme catalyses 2 D-sedoheptulose 7-phosphate = D-glycero-alpha-D-manno-heptose 7-phosphate + D-glycero-beta-D-manno-heptose 7-phosphate. It functions in the pathway carbohydrate biosynthesis; D-glycero-D-manno-heptose 7-phosphate biosynthesis; D-glycero-alpha-D-manno-heptose 7-phosphate and D-glycero-beta-D-manno-heptose 7-phosphate from sedoheptulose 7-phosphate: step 1/1. Catalyzes the isomerization of sedoheptulose 7-phosphate in D-glycero-D-manno-heptose 7-phosphate. This chain is Phosphoheptose isomerase, found in Pelodictyon phaeoclathratiforme (strain DSM 5477 / BU-1).